A 1287-amino-acid polypeptide reads, in one-letter code: FYVE zinc finger domain protein UPA1 (1287 aa).

Positions 1-298 (MTIPDPANII…SSTSLSAPAE (298 aa)) are disordered. Over residues 86–99 (DSSSFGSKPSSSAS) the composition is skewed to low complexity. The segment covering 115–136 (WATSSTTSHPSKASQSTLSPNA) has biased composition (polar residues). A PAM2 motif is present at residues 128-144 (SQSTLSPNASVFKPSRS). Composition is skewed to basic and acidic residues over residues 177-187 (RPDHAPLDHEQ) and 201-211 (KVEEQRGDHSI). Polar residues predominate over residues 212 to 235 (PHQNGLVSAQAQTASDAVSTSKYT). Positions 239 to 253 (ADQEEDQDDFVYPGA) match the PAM2L 1 motif. The segment covering 255-294 (SPSSGQAAVQDEQQAVTDSQTTKSLTKQESDPEASSTSLS) has biased composition (polar residues). 4 ANK repeats span residues 366–395 (NGLVPLHFAAKDGKTDIVRWLITQAGAIVE), 400–429 (EGETALHKAAMAGKLSVASLLLSHGADANA), 433–463 (DGWTALHNACSRGYLDLVRLLVDRGHAQIDV), and 468–497 (GAWTPLMNAASKGHLPVVRHLTAKYHADPF). Disordered stretches follow at residues 582-630 (NGGK…VGLP), 643-697 (RVGP…ASAQ), 934-960 (REAAGLDEDEDEDAADDDDDEFIYPNS), and 977-1005 (TSGTLSRPSLSQRQSSAASMLRNSVAPSE). Polar residues predominate over residues 674–695 (STPTPESVLQARRGTSSVNGAS). Residues 938-955 (GLDEDEDEDAADDDDDEF) are compositionally biased toward acidic residues. The PAM2L 2 signature appears at 941–960 (EDEDEDAADDDDDEFIYPNS). Residues 981–995 (LSRPSLSQRQSSAAS) show a composition bias toward low complexity. The FYVE-type zinc finger occupies 1055–1129 (DEEAKDCIGC…VCNGCHAELQ (75 aa)). Zn(2+) is bound by residues C1061, C1064, C1077, C1080, C1085, C1088, C1121, and C1124. The RING-type; atypical zinc finger occupies 1243–1283 (CSICMEDFVANSTIARLPCLCYFHRGCIDSWFKRGRECPVH).

This sequence belongs to the UPA1 PAM2 domain-binding protein family. In terms of assembly, part of large ribonucleoprotein complexes (mRNPs) containing RNA-binding proteins RRM4 and PAB1, endosome-binding protein UPA1, core scaffold protein UPA2 and associated factor GRP1. Interacts (via PAM2 motif) with PAB1 (via PABC domain). Interacts (via PAM2L motifs) with RRM4.

The protein resides in the cytoplasm. Its subcellular location is the cytoskeleton. It is found in the endosome. Functionally, FYVE zinc finger domain protein that functions in endosomal targeting and transport of mRNAs, as well as associated ribosomes. The endosomal mRNA transport regulates polarity of the infectious hyphae by transporting a broad spectrum of cargo mRNAs from the nucleus to cell poles. Involved in chitinase CTS1 secretion. Dispensable for general endosomal functions but crucial for endosomal recruitment of RRM4. This chain is FYVE zinc finger domain protein UPA1, found in Mycosarcoma maydis (Corn smut fungus).